A 289-amino-acid chain; its full sequence is Bifunctional protein FolD (289 aa).

NADP(+)-binding positions include 165 to 167 (GAS) and Ser-190.

This sequence belongs to the tetrahydrofolate dehydrogenase/cyclohydrolase family. As to quaternary structure, homodimer.

It catalyses the reaction (6R)-5,10-methylene-5,6,7,8-tetrahydrofolate + NADP(+) = (6R)-5,10-methenyltetrahydrofolate + NADPH. The enzyme catalyses (6R)-5,10-methenyltetrahydrofolate + H2O = (6R)-10-formyltetrahydrofolate + H(+). It functions in the pathway one-carbon metabolism; tetrahydrofolate interconversion. Its function is as follows. Catalyzes the oxidation of 5,10-methylenetetrahydrofolate to 5,10-methenyltetrahydrofolate and then the hydrolysis of 5,10-methenyltetrahydrofolate to 10-formyltetrahydrofolate. This is Bifunctional protein FolD from Ralstonia pickettii (strain 12J).